The chain runs to 588 residues: Sentrin-specific protease 2 (588 aa).

A Nuclear localization signal motif is present at residues 28–31 (KRRR). Position 32 is a phosphoserine (Ser-32). Positions 47-52 (PAKRPR) match the Nuclear localization signal motif. Residues 157-184 (EGYNRRPSGRRHSKSNPESSLTWKPQEQ) form a disordered region. The segment covering 172-184 (NPESSLTWKPQEQ) has biased composition (polar residues). The short motif at 316–331 (MEPDLSEEVSARLRLG) is the Nuclear export signal element. Residues Ser-332 and Ser-343 each carry the phosphoserine modification. The interval 394 to 558 (LRITRGDIQT…MFTCKYADYI (165 aa)) is protease. Active-site residues include His-477 and Asp-494. Cys-547 functions as the Nucleophile in the catalytic mechanism.

This sequence belongs to the peptidase C48 family. In terms of assembly, binds to SUMO2 and SUMO3. Interacts with the C-terminal domain of NUP153 via its N-terminus. Interacts with MTA1. Post-translationally, polyubiquitinated; which leads to proteasomal degradation. Highly expressed in testis. Detected in brain, heart and thymus.

Its subcellular location is the nucleus. The protein localises to the nuclear pore complex. The protein resides in the nucleus membrane. It is found in the cytoplasm. It localises to the cytoplasmic vesicle. Its subcellular location is the PML body. Protease that catalyzes two essential functions in the SUMO pathway. The first is the hydrolysis of an alpha-linked peptide bond at the C-terminal end of the small ubiquitin-like modifier (SUMO) propeptides, SUMO1, SUMO2 and SUMO3 leading to the mature form of the proteins. The second is the deconjugation of SUMO1, SUMO2 and SUMO3 from targeted proteins, by cleaving an epsilon-linked peptide bond between the C-terminal glycine of the mature SUMO and the lysine epsilon-amino group of the target protein. May down-regulate CTNNB1 levels and thereby modulate the Wnt pathway. Deconjugates SUMO2 from MTA1. Plays a dynamic role in adipogenesis by desumoylating and promoting the stabilization of CEBPB. Acts as a regulator of the cGAS-STING pathway by catalyzing desumoylation of CGAS and STING1 during the late phase of viral infection. Its function is as follows. Activates transcription. The polypeptide is Sentrin-specific protease 2 (Senp2) (Mus musculus (Mouse)).